Here is a 405-residue protein sequence, read N- to C-terminus: Probable tRNA sulfurtransferase (405 aa).

One can recognise a THUMP domain in the interval 60–165 (DQVMARLSQV…REAIYLSTKT (106 aa)). ATP is bound by residues 183-184 (ML), 208-209 (HF), Arg265, Gly287, and Gln296.

It belongs to the ThiI family.

The protein localises to the cytoplasm. It catalyses the reaction [ThiI sulfur-carrier protein]-S-sulfanyl-L-cysteine + a uridine in tRNA + 2 reduced [2Fe-2S]-[ferredoxin] + ATP + H(+) = [ThiI sulfur-carrier protein]-L-cysteine + a 4-thiouridine in tRNA + 2 oxidized [2Fe-2S]-[ferredoxin] + AMP + diphosphate. The enzyme catalyses [ThiS sulfur-carrier protein]-C-terminal Gly-Gly-AMP + S-sulfanyl-L-cysteinyl-[cysteine desulfurase] + AH2 = [ThiS sulfur-carrier protein]-C-terminal-Gly-aminoethanethioate + L-cysteinyl-[cysteine desulfurase] + A + AMP + 2 H(+). The protein operates within cofactor biosynthesis; thiamine diphosphate biosynthesis. Its function is as follows. Catalyzes the ATP-dependent transfer of a sulfur to tRNA to produce 4-thiouridine in position 8 of tRNAs, which functions as a near-UV photosensor. Also catalyzes the transfer of sulfur to the sulfur carrier protein ThiS, forming ThiS-thiocarboxylate. This is a step in the synthesis of thiazole, in the thiamine biosynthesis pathway. The sulfur is donated as persulfide by IscS. This is Probable tRNA sulfurtransferase from Lacticaseibacillus paracasei (strain ATCC 334 / BCRC 17002 / CCUG 31169 / CIP 107868 / KCTC 3260 / NRRL B-441) (Lactobacillus paracasei).